The following is a 121-amino-acid chain: MGYKVGNTRVAGDYTHHGKVDGTKIQGLGASVLYDFDTNSKVQPYVGARVATNQFKYTNRAEQKFKSSSDIKLGYGVVAGAKYKLDGNWYANGGVEYNRLGNFDSTKVNNYGAKVGVGYGF.

This sequence belongs to the opacity porin family.

This is Protein opa (opa) from Haemophilus influenzae (strain ATCC 51907 / DSM 11121 / KW20 / Rd).